Here is a 612-residue protein sequence, read N- to C-terminus: Glutamine--fructose-6-phosphate aminotransferase [isomerizing] (612 aa).

C2 functions as the Nucleophile; for GATase activity in the catalytic mechanism. The region spanning 2-219 is the Glutamine amidotransferase type-2 domain; the sequence is CGIVGANSTR…EGDIAIISKD (218 aa). SIS domains lie at 287-427 and 460-602; these read AKEL…LKNS and ISEY…VDQP. Residue K607 is the For Fru-6P isomerization activity of the active site.

Homodimer.

The protein resides in the cytoplasm. The catalysed reaction is D-fructose 6-phosphate + L-glutamine = D-glucosamine 6-phosphate + L-glutamate. Catalyzes the first step in hexosamine metabolism, converting fructose-6P into glucosamine-6P using glutamine as a nitrogen source. The chain is Glutamine--fructose-6-phosphate aminotransferase [isomerizing] from Francisella tularensis subsp. tularensis (strain SCHU S4 / Schu 4).